The sequence spans 285 residues: Heme oxygenase 3, chloroplastic (285 aa).

A chloroplast-targeting transit peptide spans 1 to 58; sequence MATTRLNPSCHFPASTRLSCESYLGLRTTGRISYARTLTAPRGYLAVKANGGQASVVT. A heme b-binding site is contributed by histidine 89. Over residues 89-105 the composition is skewed to basic and acidic residues; that stretch reads HTKDQAREGEKESRSPE. The tract at residues 89–109 is disordered; sequence HTKDQAREGEKESRSPEEGPV.

The protein belongs to the heme oxygenase family. As to expression, widely expressed at low levels.

It is found in the plastid. Its subcellular location is the chloroplast. The enzyme catalyses heme b + 3 reduced [NADPH--hemoprotein reductase] + 3 O2 = biliverdin IXalpha + CO + Fe(2+) + 3 oxidized [NADPH--hemoprotein reductase] + 3 H2O + H(+). In terms of biological role, catalyzes the opening of the heme ring to form the open-chain tetrapyrrole biliverdin IX with the release of iron and carbon monoxide (CO). Produces specifically the biliverdin IX-alpha isomer. Plays a minor role in phytochrome assembly and photomorphogenesis. This chain is Heme oxygenase 3, chloroplastic (HO3), found in Arabidopsis thaliana (Mouse-ear cress).